The sequence spans 294 residues: MALSFFFLAISLGSPTAIGDVSFDLSTATKKSYSSFITQLRDALPTQGTVCGIPLLPSTASGSQWFRFFNLTNYNDETVTVAVNVTNVYIVAYRADAVSYFFEDTPAEAFKLIFAGTKTVKLPYSGNYDKLQSVVGKQRDMIELGIPALSSAITNMVYYDYQSTAAALLVLIQCTAEAARYKYIEQQVSSHISSNFYPNQAVISLENKWGALSKQIQIANRTGHGQFENPVELYNPDGTRFSVTNTSAGVVKGNIKLLLYYKASVGSEYDIPTTILHPGAMGMLHNQNGNYVTM.

The first 19 residues, 1–19, serve as a signal peptide directing secretion; that stretch reads MALSFFFLAISLGSPTAIG. Asn70 carries N-linked (GlcNAc...) asparagine glycosylation. Active-site residues include Glu177 and Arg180. N-linked (GlcNAc...) asparagine glycosylation is present at Asn220. A propeptide spanning residues 265–294 is cleaved from the precursor; that stretch reads VGSEYDIPTTILHPGAMGMLHNQNGNYVTM.

Belongs to the ribosome-inactivating protein family. Type 1 RIP subfamily.

The enzyme catalyses Endohydrolysis of the N-glycosidic bond at one specific adenosine on the 28S rRNA.. Functionally, inhibits protein synthesis by depurinating 28S rRNA in ribosomes. This chain is Type I ribosome-inactivating protein trichoanguina (TCA), found in Trichosanthes anguina (Snake gourd).